Here is a 277-residue protein sequence, read N- to C-terminus: Phosphoenolpyruvate synthase regulatory protein (277 aa).

157-164 (GVSRCGKT) lines the ADP pocket.

It belongs to the pyruvate, phosphate/water dikinase regulatory protein family. PSRP subfamily.

It carries out the reaction [pyruvate, water dikinase] + ADP = [pyruvate, water dikinase]-phosphate + AMP + H(+). It catalyses the reaction [pyruvate, water dikinase]-phosphate + phosphate + H(+) = [pyruvate, water dikinase] + diphosphate. Its function is as follows. Bifunctional serine/threonine kinase and phosphorylase involved in the regulation of the phosphoenolpyruvate synthase (PEPS) by catalyzing its phosphorylation/dephosphorylation. The polypeptide is Phosphoenolpyruvate synthase regulatory protein (Shigella boydii serotype 4 (strain Sb227)).